We begin with the raw amino-acid sequence, 126 residues long: C2H2-type zinc-finger transcription factor M5 (126 aa).

Disordered regions lie at residues 17 to 52 (AQPDFEDWGDLGDLMPDVLPESNGSSSGTATDNDNR) and 103 to 126 (EKKSCNRVRRYSNGRERPRPRVKD). A compositionally biased stretch (polar residues) spans 38-48 (SNGSSSGTATD). Residues 51–76 (NRCWDHGCNGKKFLNHSNLVRHRREN) form a C2H2-type 1; degenerate zinc finger. The C2H2-type 2; degenerate zinc-finger motif lies at 83-115 (FTCPMCGAYFSRSTARNQHLEKKSCNRVRRYSN). Positions 115 to 126 (NGRERPRPRVKD) are enriched in basic and acidic residues.

This sequence belongs to the GLI C2H2-type zinc-finger protein family.

The protein resides in the nucleus. Transcription factor that probably regulates the expression of the gene cluster that mediates the biosynthesis of squalestatin S1 (SQS1, also known as zaragozic acid A), a heavily oxidized fungal polyketide that offers potent cholesterol lowering activity by targeting squalene synthase (SS). This chain is C2H2-type zinc-finger transcription factor M5, found in Phoma sp. (strain ATCC 20986 / MF5453).